The following is a 184-amino-acid chain: ATP synthase subunit b, chloroplastic (184 aa).

Residues 4 to 24 traverse the membrane as a helical segment; sequence IINLVIFSGYWPIAGNFGLNT.

This sequence belongs to the ATPase B chain family. In terms of assembly, F-type ATPases have 2 components, F(1) - the catalytic core - and F(0) - the membrane proton channel. F(1) has five subunits: alpha(3), beta(3), gamma(1), delta(1), epsilon(1). F(0) has four main subunits: a(1), b(1), b'(1) and c(10-14). The alpha and beta chains form an alternating ring which encloses part of the gamma chain. F(1) is attached to F(0) by a central stalk formed by the gamma and epsilon chains, while a peripheral stalk is formed by the delta, b and b' chains.

Its subcellular location is the plastid. It is found in the chloroplast thylakoid membrane. In terms of biological role, f(1)F(0) ATP synthase produces ATP from ADP in the presence of a proton or sodium gradient. F-type ATPases consist of two structural domains, F(1) containing the extramembraneous catalytic core and F(0) containing the membrane proton channel, linked together by a central stalk and a peripheral stalk. During catalysis, ATP synthesis in the catalytic domain of F(1) is coupled via a rotary mechanism of the central stalk subunits to proton translocation. Functionally, component of the F(0) channel, it forms part of the peripheral stalk, linking F(1) to F(0). This is ATP synthase subunit b, chloroplastic from Physcomitrium patens (Spreading-leaved earth moss).